The primary structure comprises 438 residues: Cyclic 2,3-diphosphoglycerate synthetase (438 aa).

This sequence belongs to the cyclic 2,3-diphosphoglycerate synthetase family.

It is found in the cytoplasm. It catalyses the reaction (2R)-2,3-bisphosphoglycerate + ATP + H(+) = cyclic (2R)-2,3-bisphosphoglycerate + ADP + phosphate. In terms of biological role, catalyzes the formation of cyclic 2,3-diphosphoglycerate (cDPG) by formation of an intramolecular phosphoanhydride bond at the expense of ATP. This is Cyclic 2,3-diphosphoglycerate synthetase from Thermococcus gammatolerans (strain DSM 15229 / JCM 11827 / EJ3).